The following is a 77-amino-acid chain: Large ribosomal subunit protein uL29 (77 aa).

Belongs to the universal ribosomal protein uL29 family.

The polypeptide is Large ribosomal subunit protein uL29 (rpmC) (Mycobacterium bovis (strain ATCC BAA-935 / AF2122/97)).